Here is a 437-residue protein sequence, read N- to C-terminus: Protein disulfide-isomerase tmx3a (437 aa).

An N-terminal signal peptide occupies residues 1 to 21 (MANMRNIILTALLSAIALVSG). In terms of domain architecture, Thioredoxin spans 22-126 (YVEGLDDKFT…IIEFTNRVSG (105 aa)). Topologically, residues 22 to 368 (YVEGLDDKFT…KNTVMSMVET (347 aa)) are extracellular. Active-site nucleophile residues include Cys48 and Cys51. Residues Cys48 and Cys51 are joined by a disulfide bond. N-linked (GlcNAc...) asparagine glycosylation occurs at Asn308. A helical membrane pass occupies residues 369 to 389 (APVFSCFVLGLPVGVVVLVIY). The Cytoplasmic portion of the chain corresponds to 390–437 (ATCTAVPADDEKPEEEATASPALDTHGKKAIESQPESTEKTSEAKKED). The interval 398-437 (DDEKPEEEATASPALDTHGKKAIESQPESTEKTSEAKKED) is disordered. Over residues 414–437 (THGKKAIESQPESTEKTSEAKKED) the composition is skewed to basic and acidic residues. A Di-lysine motif motif is present at residues 434–437 (KKED).

The protein localises to the endoplasmic reticulum membrane. The catalysed reaction is Catalyzes the rearrangement of -S-S- bonds in proteins.. Its function is as follows. Probable disulfide isomerase, which participates in the folding of proteins containing disulfide bonds. May act as a dithiol oxidase. Acts as a regulator of endoplasmic reticulum-mitochondria contact sites via its ability to regulate redox signals. In Danio rerio (Zebrafish), this protein is Protein disulfide-isomerase tmx3a (tmx3a).